The sequence spans 103 residues: N(4)-acetylcytidine amidohydrolase (103 aa).

Residues 6 to 92 (TFFERFEPGI…VIQEIYPGLE (87 aa)) form the ASCH domain. The active-site Proton acceptor is the Lys-20. Thr-23 functions as the Nucleophile in the catalytic mechanism. Glu-73 acts as the Proton donor in catalysis.

Belongs to the N(4)-acetylcytidine amidohydrolase family.

The enzyme catalyses N(4)-acetylcytidine + H2O = cytidine + acetate + H(+). It catalyses the reaction N(4)-acetyl-2'-deoxycytidine + H2O = 2'-deoxycytidine + acetate + H(+). It carries out the reaction N(4)-acetylcytosine + H2O = cytosine + acetate + H(+). Its function is as follows. Catalyzes the hydrolysis of N(4)-acetylcytidine (ac4C). The chain is N(4)-acetylcytidine amidohydrolase from Shewanella sp. (strain MR-7).